The primary structure comprises 582 residues: La-related protein 7 (582 aa).

Met1 is modified (N-acetylmethionine). The interval 1–27 is disordered; it reads METESGNQEKVMEEESTEKKKEVEKKK. The segment covering 10 to 25 has biased composition (basic and acidic residues); it reads KVMEEESTEKKKEVEK. Residues 28 to 122 enclose the HTH La-type RNA-binding domain; that stretch reads RSRVKQVLAD…KPLGERPKDE (95 aa). One can recognise an RRM domain in the interval 125-203; the sequence is RTVYVELLPK…PRKPGIFPKT (79 aa). Disordered stretches follow at residues 188-368 and 410-442; these read NPPE…ERHK and KSESEMETDSGVPQNTGMKNEKTANREECRTQE. A compositionally biased stretch (basic residues) spans 219–228; it reads KKKKKKKGRM. The segment covering 229 to 240 has biased composition (basic and acidic residues); that stretch reads KKEDNIQAKEEN. Lys237 participates in a covalent cross-link: Glycyl lysine isopeptide (Lys-Gly) (interchain with G-Cter in SUMO2). Thr257 is subject to Phosphothreonine. 6 positions are modified to phosphoserine: Ser258, Ser261, Ser273, Ser298, Ser299, and Ser300. The segment covering 316 to 335 has biased composition (basic and acidic residues); that stretch reads IQKDIIKEASEASKENRDIE. Position 337 is a phosphoserine (Ser337). The residue at position 338 (Thr338) is a Phosphothreonine. Residue Ser351 is modified to Phosphoserine. Basic residues predominate over residues 354 to 367; that stretch reads KTKRKHKKKHKERH. Lys410 is covalently cross-linked (Glycyl lysine isopeptide (Lys-Gly) (interchain with G-Cter in SUMO2)). Basic and acidic residues predominate over residues 428 to 442; the sequence is KNEKTANREECRTQE. Positions 450–563 constitute a xRRM domain; it reads QFVSGVIVKI…TEKLITKAEK (114 aa).

This sequence belongs to the LARP7 family. Core component of the 7SK RNP complex, at least composed of 7SK RNA, LARP7, MEPCE, HEXIM1 (or HEXIM2) and P-TEFb (composed of CDK9 and CCNT1/cyclin-T1). Interacts with METTL16. Interacts with RBM7; upon genotoxic stress this interaction is enhanced, triggering the release of inactive P-TEFb complex from the core, yielding to P-TEFb complex activation. Associates with box C/D small nucleolar ribonucleoprotein (snoRNP) complexes.

The protein resides in the nucleus. The protein localises to the nucleoplasm. RNA-binding protein that specifically binds distinct small nuclear RNA (snRNAs) and regulates their processing and function. Specifically binds the 7SK snRNA (7SK RNA) and acts as a core component of the 7SK ribonucleoprotein (RNP) complex, thereby acting as a negative regulator of transcription elongation by RNA polymerase II. The 7SK RNP complex sequesters the positive transcription elongation factor b (P-TEFb) in a large inactive 7SK RNP complex preventing RNA polymerase II phosphorylation and subsequent transcriptional elongation. The 7SK RNP complex also promotes snRNA gene transcription by RNA polymerase II via interaction with the little elongation complex (LEC). LARP7 specifically binds to the highly conserved 3'-terminal U-rich stretch of 7SK RNA; on stimulation, remains associated with 7SK RNA, whereas P-TEFb is released from the complex. LARP7 also acts as a regulator of mRNA splicing fidelity by promoting U6 snRNA processing. Specifically binds U6 snRNAs and associates with a subset of box C/D RNP complexes: promotes U6 snRNA 2'-O-methylation by facilitating U6 snRNA loading into box C/D RNP complexes. U6 snRNA 2'-O-methylation is required for mRNA splicing fidelity. Binds U6 snRNAs with a 5'-CAGGG-3' sequence motif. U6 snRNA processing is required for spermatogenesis. The chain is La-related protein 7 from Homo sapiens (Human).